The primary structure comprises 451 residues: MSEQKPVQWASKIGFVMAAAGSAIGLGAIWKFPYVAGTNGGGAFFLIFVLFTILLGYPLLVGEFIFGRRNQTNAIDAYKKEAPRSAWFLTGWIGVAACFLVLSFYSVIGGWILLYIVKTASGSLSGLSQAQYGALFASIIQNPVQTLAAQLVFMALTVLVVARGVQKGIERVSAVMMPILFLLFILLVLRSLTLNGAMEGVKFLLVPHFGDLTPESILFALGQAFFTLTLGVSVMVTYSSYLPKTQNIPRSAASIVLMNIIVTLLAGLAIFPAVFSFGFQPNEGPTLLFTVLPAVFEQLPFGTLFFIGFLVAFLFAALTSAFSMVEIIVATIGKGDEKKRKKLSWTSGLLIFLVGIPCCLSYGVLSDVHLFGKTFFDIADFTVSNVLMPSGALLISLFIPLKISKSELLAEMRNGSNAGKAFFYTWFYLLRFIVPLAIIIVFLNLIGILSF.

11 consecutive transmembrane segments (helical) span residues 13-33 (IGFVMAAAGSAIGLGAIWKFP), 41-61 (GGAFFLIFVLFTILLGYPLLV), 97-117 (ACFLVLSFYSVIGGWILLYIV), 142-162 (NPVQTLAAQLVFMALTVLVVA), 174-194 (AVMMPILFLLFILLVLRSLTL), 217-237 (ILFALGQAFFTLTLGVSVMVT), 255-275 (IVLMNIIVTLLAGLAIFPAVF), 299-319 (LPFGTLFFIGFLVAFLFAALT), 345-365 (WTSGLLIFLVGIPCCLSYGVL), 381-401 (FTVSNVLMPSGALLISLFIPL), and 429-449 (LLRFIVPLAIIIVFLNLIGIL).

Belongs to the sodium:neurotransmitter symporter (SNF) (TC 2.A.22) family.

The protein localises to the cell membrane. In terms of biological role, putative sodium-dependent transporter. This is an uncharacterized protein from Bacillus subtilis (strain 168).